The primary structure comprises 113 residues: Na(+)/H(+) antiporter subunit C1 (113 aa).

The next 3 membrane-spanning stretches (helical) occupy residues 1–21 (MEII…YLVL), 28–48 (IVMG…TMGG), and 72–92 (LILT…VLAF).

The protein belongs to the CPA3 antiporters (TC 2.A.63) subunit C family. In terms of assembly, may form a heterooligomeric complex that consists of seven subunits: mnhA1, mnhB1, mnhC1, mnhD1, mnhE1, mnhF1 and mnhG1.

Its subcellular location is the cell membrane. Its function is as follows. Mnh complex is a Na(+)/H(+) antiporter involved in Na(+) excretion. This chain is Na(+)/H(+) antiporter subunit C1 (mnhC1), found in Staphylococcus aureus (strain JH1).